A 1129-amino-acid chain; its full sequence is Protein DWARF 53-LIKE (1129 aa).

In terms of domain architecture, Clp R spans 8-180; it reads ARQCLSPAAV…KLAILRPAPP (173 aa). 2 repeat regions span residues 12–85 and 102–180; these read LSPA…LDRL and VSNS…PAPP. Residues 519–573 form a disordered region; it reads RYIGVPADKERSANPSKGSESIGVQKDVIKPCAVSAVHSSSTARPISSPSVTNKR. Over residues 557–568 the composition is skewed to low complexity; the sequence is SSSTARPISSPS. An EAR 1 motif is present at residues 577 to 581; it reads LVLNL. The tract at residues 587–654 is disordered; that stretch reads KSDENLQERG…KRVEDSERSV (68 aa). A compositionally biased stretch (polar residues) spans 596 to 608; sequence GMQSQHGTLSNAD. Residues 645-654 are compositionally biased toward basic and acidic residues; the sequence is KRVEDSERSV. 2 short sequence motifs (EAR) span residues 798–802 and 975–980; these read LDLNL and FDLNLP. The disordered stretch occupies residues 975 to 1001; that stretch reads FDLNLPVDEDEPFDADDDSSSHENSYG. Over residues 981–992 the composition is skewed to acidic residues; it reads VDEDEPFDADDD.

This sequence belongs to the ClpA/ClpB family. In terms of processing, polyubiquitinated. Strigolactone, but not karrikin, triggers rapid SCF(D3)-dependent degradation via the proteasome.

In terms of biological role, repressor of strigolactones (SL) signaling. Subjected to a negative feedback control of SL signaling. This chain is Protein DWARF 53-LIKE, found in Oryza sativa subsp. japonica (Rice).